Here is a 141-residue protein sequence, read N- to C-terminus: ECDALQRFKVKHQWAEAFGTSHHRLDFGLKLWNSIFRDAPEIRGLFKRVDGDNAYSAEFEAHAERVLGGLDMTISLLDDQAAFDAQLAHLKSQHAERNIKADYYGVFVNELLAVLPDYLGTKLDFKAWSECLGVITGAIHD.

Positions 1-141 (ECDALQRFKV…LGVITGAIHD (141 aa)) constitute a Globin domain. Cysteine 2 and cysteine 131 are oxidised to a cystine. A heme b-binding site is contributed by histidine 94.

Belongs to the globin family. As to quaternary structure, the giant hemoglobins of worms are formed of a monomeric subunit and a disulfide-bonded trimer. This subunit is monomeric.

It is found in the secreted. The protein is Globin, extracellular monomeric of Tubifex tubifex (Sludge worm).